We begin with the raw amino-acid sequence, 203 residues long: Thymidylate kinase (203 aa).

7–14 (GGEGAGKT) serves as a coordination point for ATP.

Belongs to the thymidylate kinase family.

It catalyses the reaction dTMP + ATP = dTDP + ADP. Its function is as follows. Phosphorylation of dTMP to form dTDP in both de novo and salvage pathways of dTTP synthesis. The protein is Thymidylate kinase of Chlamydia trachomatis serovar L2 (strain ATCC VR-902B / DSM 19102 / 434/Bu).